Consider the following 830-residue polypeptide: Probable mixed-linked glucan synthase 7 (830 aa).

Transmembrane regions (helical) follow at residues 61-81 and 98-118; these read LTIFVRIAIFVLFFKWRITYA and AATFWTASIAGELWFAFMWVL. Asp186 is a catalytic residue. A coiled-coil region spans residues 251 to 279; that stretch reads ELVRDRRRVRREYEEMRLRIDALQAADAR. Residues Asp367 and Asp369 each coordinate substrate. Asp529 is an active-site residue. 6 helical membrane passes run 613–633, 638–658, 676–696, 735–755, 776–796, and 805–825; these read LFLMAYCLFPAIPLIAGGGGW, TPTYVAFLAALMVTLAAVAVL, FWMVSATSAYLAAVAQVALKV, ALMAPTAAALAVNVASMAAAG, LPVAFNVWVVVHLYPFALGLM, and PILFLFAVVAYLAVRFLCLLL.

The protein belongs to the glycosyltransferase 2 family. Plant cellulose synthase-like F subfamily. As to expression, expressed in mature pollen.

The protein resides in the golgi apparatus membrane. In terms of biological role, may catalyze both beta-1,3 and beta-1,4 glycosidic linkage on beta-D-glucan. Essential for (1,3;1,4)-beta-D-glucans synthesis in grasses and cereals (Poaceae). The mixed-linked glucans (which are not present in walls of dicotyledons or most other monocotyledonous plants) are particularly important constituents of the walls of the starchy endosperm and aleurone cells of cereal grains such as oats, wheat, rice and barley. They can account for up to 70% by weight of the wall. The protein is Probable mixed-linked glucan synthase 7 (CSLF7) of Oryza sativa subsp. japonica (Rice).